Consider the following 294-residue polypeptide: 2-dehydro-3-deoxy-phosphogluconate/2-dehydro-3-deoxy-6-phosphogalactonate aldolase (294 aa).

Substrate contacts are provided by residues 43 to 44, 130 to 132, and 155 to 157; these read TT, YNY, and KDT. Lys155 acts as the Schiff-base intermediate with substrate in catalysis.

This sequence belongs to the DapA family. KDPG aldolase subfamily. In terms of assembly, homotetramer; dimer of dimers.

It catalyses the reaction 2-dehydro-3-deoxy-6-phospho-D-gluconate = D-glyceraldehyde 3-phosphate + pyruvate. It carries out the reaction 2-dehydro-3-deoxy-6-phospho-D-galactonate = D-glyceraldehyde 3-phosphate + pyruvate. Its pathway is carbohydrate acid metabolism; 2-dehydro-3-deoxy-D-gluconate degradation; D-glyceraldehyde 3-phosphate and pyruvate from 2-dehydro-3-deoxy-D-gluconate: step 2/2. Its function is as follows. Involved in the degradation of glucose and galactose via the Entner-Doudoroff pathway. Catalyzes the reversible cleavage of 2-keto-3-deoxy-6-phosphogluconate (KDPG) and 2-keto-3-deoxygluconate (KDG) forming pyruvate and glyceraldehyde 3-phosphate or glyceraldehyde, respectively. It is also able to catalyze the reversible cleavage of 2-keto-3-deoxy-6-phosphogalactonate (KDPGal) and 2-keto-3-deoxygalactonate (KDGal). It is equally active with both D- and L-glyceraldehyde. The polypeptide is 2-dehydro-3-deoxy-phosphogluconate/2-dehydro-3-deoxy-6-phosphogalactonate aldolase (Saccharolobus solfataricus (Sulfolobus solfataricus)).